Here is a 170-residue protein sequence, read N- to C-terminus: Photosystem I assembly protein Ycf3 (170 aa).

TPR repeat units lie at residues 35–68, 72–105, and 120–153; these read AFTY…EIDP, SYIL…NPFL, and GEQA…TPGN.

The protein belongs to the Ycf3 family.

The protein localises to the plastid. The protein resides in the chloroplast thylakoid membrane. Its function is as follows. Essential for the assembly of the photosystem I (PSI) complex. May act as a chaperone-like factor to guide the assembly of the PSI subunits. This chain is Photosystem I assembly protein Ycf3, found in Agrostis stolonifera (Creeping bentgrass).